Consider the following 347-residue polypeptide: Quinolinate synthase (347 aa).

Positions 47 and 68 each coordinate iminosuccinate. C113 lines the [4Fe-4S] cluster pocket. Residues 139 to 141 (YAN) and S156 each bind iminosuccinate. C200 contributes to the [4Fe-4S] cluster binding site. Iminosuccinate-binding positions include 226-228 (HPE) and T243. C297 serves as a coordination point for [4Fe-4S] cluster.

This sequence belongs to the quinolinate synthase family. Type 1 subfamily. [4Fe-4S] cluster serves as cofactor.

The protein resides in the cytoplasm. It carries out the reaction iminosuccinate + dihydroxyacetone phosphate = quinolinate + phosphate + 2 H2O + H(+). It functions in the pathway cofactor biosynthesis; NAD(+) biosynthesis; quinolinate from iminoaspartate: step 1/1. Functionally, catalyzes the condensation of iminoaspartate with dihydroxyacetone phosphate to form quinolinate. The chain is Quinolinate synthase from Shigella dysenteriae serotype 1 (strain Sd197).